A 412-amino-acid polypeptide reads, in one-letter code: Phosphoglycerate kinase (412 aa).

Residues 26–28, arginine 42, 65–68, arginine 133, and arginine 166 each bind substrate; these read DFN and HLGR. Residues lysine 217, glycine 308, glutamate 339, and 368–371 contribute to the ATP site; that span reads GGDS.

The protein belongs to the phosphoglycerate kinase family. In terms of assembly, monomer.

It localises to the cytoplasm. The catalysed reaction is (2R)-3-phosphoglycerate + ATP = (2R)-3-phospho-glyceroyl phosphate + ADP. It functions in the pathway carbohydrate degradation; glycolysis; pyruvate from D-glyceraldehyde 3-phosphate: step 2/5. The chain is Phosphoglycerate kinase from Synechococcus sp. (strain JA-3-3Ab) (Cyanobacteria bacterium Yellowstone A-Prime).